A 354-amino-acid chain; its full sequence is Biotin synthase (354 aa).

In terms of domain architecture, Radical SAM core spans 41 to 268 (NEVQISRLLS…LSRVRLSAGR (228 aa)). Residues C56, C60, and C63 each contribute to the [4Fe-4S] cluster site. [2Fe-2S] cluster contacts are provided by C100, C131, C191, and R263.

The protein belongs to the radical SAM superfamily. Biotin synthase family. Homodimer. The cofactor is [4Fe-4S] cluster. [2Fe-2S] cluster is required as a cofactor.

It catalyses the reaction (4R,5S)-dethiobiotin + (sulfur carrier)-SH + 2 reduced [2Fe-2S]-[ferredoxin] + 2 S-adenosyl-L-methionine = (sulfur carrier)-H + biotin + 2 5'-deoxyadenosine + 2 L-methionine + 2 oxidized [2Fe-2S]-[ferredoxin]. It participates in cofactor biosynthesis; biotin biosynthesis; biotin from 7,8-diaminononanoate: step 2/2. Functionally, catalyzes the conversion of dethiobiotin (DTB) to biotin by the insertion of a sulfur atom into dethiobiotin via a radical-based mechanism. The protein is Biotin synthase of Shewanella amazonensis (strain ATCC BAA-1098 / SB2B).